A 298-amino-acid polypeptide reads, in one-letter code: Ribosomal RNA small subunit methyltransferase A (298 aa).

Positions 35, 37, 62, 83, 108, and 133 each coordinate S-adenosyl-L-methionine.

This sequence belongs to the class I-like SAM-binding methyltransferase superfamily. rRNA adenine N(6)-methyltransferase family. RsmA subfamily.

The protein resides in the cytoplasm. The enzyme catalyses adenosine(1518)/adenosine(1519) in 16S rRNA + 4 S-adenosyl-L-methionine = N(6)-dimethyladenosine(1518)/N(6)-dimethyladenosine(1519) in 16S rRNA + 4 S-adenosyl-L-homocysteine + 4 H(+). Functionally, specifically dimethylates two adjacent adenosines (A1518 and A1519) in the loop of a conserved hairpin near the 3'-end of 16S rRNA in the 30S particle. May play a critical role in biogenesis of 30S subunits. This chain is Ribosomal RNA small subunit methyltransferase A, found in Streptococcus pyogenes serotype M12 (strain MGAS9429).